A 138-amino-acid polypeptide reads, in one-letter code: Large ribosomal subunit protein uL16 (138 aa).

This sequence belongs to the universal ribosomal protein uL16 family. In terms of assembly, part of the 50S ribosomal subunit.

Functionally, binds 23S rRNA and is also seen to make contacts with the A and possibly P site tRNAs. The sequence is that of Large ribosomal subunit protein uL16 from Ureaplasma parvum serovar 3 (strain ATCC 27815 / 27 / NCTC 11736).